Consider the following 163-residue polypeptide: Disulfide bond formation protein B (163 aa).

Topologically, residues 1–9 (MKKLTYRKI) are cytoplasmic. The helical transmembrane segment at 10-26 (QSFQAIITVLVIFASFY) threads the bilayer. The Periplasmic portion of the chain corresponds to 27–44 (LEYAAGLQPCPLCLMQRV). C36 and C39 are disulfide-bonded. Residues 45 to 58 (CVFILLGLMGVSLG) traverse the membrane as a helical segment. Residues 59-64 (TVKKAH) are Cytoplasmic-facing. Residues 65–82 (IVSLIQFQVACAGLYFSL) traverse the membrane as a helical segment. Topologically, residues 83-139 (RQLWLQSLPSDQAPACMPGLDVLIQYFPWQTVAKALFWGAGDCAEVTWTMFGVSMPG) are periplasmic. A disulfide bond links C98 and C125. Residues 140–158 (WAAMYFLSMAIMGLFLFFR) form a helical membrane-spanning segment. The Cytoplasmic segment spans residues 159–163 (TRTIN).

It belongs to the DsbB family.

Its subcellular location is the cell inner membrane. Functionally, required for disulfide bond formation in some periplasmic proteins. Acts by oxidizing the DsbA protein. This chain is Disulfide bond formation protein B, found in Legionella pneumophila (strain Lens).